A 183-amino-acid polypeptide reads, in one-letter code: Probable transcription termination protein NusA (183 aa).

Residues 32-98 (DERVAFIVKE…DDVWVKRVGK (67 aa)) enclose the KH domain. Residues 149–183 (RKRAKRPVVKDQQQEQTETKQETDVQQDVKETVKE) are disordered. A compositionally biased stretch (basic and acidic residues) spans 156–183 (VVKDQQQEQTETKQETDVQQDVKETVKE).

The protein belongs to the NusA family.

The protein localises to the cytoplasm. Its function is as follows. Participates in transcription termination. The chain is Probable transcription termination protein NusA from Methanocaldococcus jannaschii (strain ATCC 43067 / DSM 2661 / JAL-1 / JCM 10045 / NBRC 100440) (Methanococcus jannaschii).